The chain runs to 405 residues: Threonine synthase (405 aa).

An N6-(pyridoxal phosphate)lysine modification is found at K104. Residues N130, 231–235, and T369 contribute to the pyridoxal 5'-phosphate site; that span reads GNAGN.

Belongs to the threonine synthase family. As to quaternary structure, homotrimer. Pyridoxal 5'-phosphate serves as cofactor.

It catalyses the reaction O-phospho-L-homoserine + H2O = L-threonine + phosphate. It participates in amino-acid biosynthesis; L-threonine biosynthesis; L-threonine from L-aspartate: step 5/5. Its function is as follows. Catalyzes the gamma-elimination of phosphate from L-phosphohomoserine and the beta-addition of water to produce L-threonine. Does not catalyze the conversion of O-acetyl-L-homoserine into threonine. The protein is Threonine synthase (thrC) of Methanosarcina acetivorans (strain ATCC 35395 / DSM 2834 / JCM 12185 / C2A).